Reading from the N-terminus, the 183-residue chain is uncharacterized protein (183 aa).

Residues 55–183 (PRAAVLLVDL…RSRRGSRPAR (129 aa)) form the GGDEF domain.

Might be involved in pSAM2 replication control. This is an uncharacterized protein from Streptomyces ambofaciens.